The sequence spans 422 residues: Adenylosuccinate synthetase (422 aa).

GTP is bound by residues 11–17 (GDEGKGK) and 39–41 (GHT). Catalysis depends on Asp12, which acts as the Proton acceptor. Mg(2+)-binding residues include Asp12 and Gly39. IMP contacts are provided by residues 12–15 (DEGK), 37–40 (NAGH), Thr129, Arg143, Asn219, Thr234, and Arg298. His40 (proton donor) is an active-site residue. 294–300 (VTTGRRR) is a binding site for substrate. GTP is bound by residues Arg300, 326 to 328 (KLD), and 409 to 411 (GTG).

The protein belongs to the adenylosuccinate synthetase family. Homodimer. Mg(2+) is required as a cofactor.

The protein localises to the cytoplasm. It catalyses the reaction IMP + L-aspartate + GTP = N(6)-(1,2-dicarboxyethyl)-AMP + GDP + phosphate + 2 H(+). It participates in purine metabolism; AMP biosynthesis via de novo pathway; AMP from IMP: step 1/2. Its function is as follows. Plays an important role in the de novo pathway and in the salvage pathway of purine nucleotide biosynthesis. Catalyzes the first committed step in the biosynthesis of AMP from IMP. This Ajellomyces capsulatus (strain H143) (Darling's disease fungus) protein is Adenylosuccinate synthetase.